The following is a 185-amino-acid chain: Elongation factor P (185 aa).

The protein belongs to the elongation factor P family.

It is found in the cytoplasm. It participates in protein biosynthesis; polypeptide chain elongation. In terms of biological role, involved in peptide bond synthesis. Stimulates efficient translation and peptide-bond synthesis on native or reconstituted 70S ribosomes in vitro. Probably functions indirectly by altering the affinity of the ribosome for aminoacyl-tRNA, thus increasing their reactivity as acceptors for peptidyl transferase. This Bacillus pumilus (strain SAFR-032) protein is Elongation factor P.